The chain runs to 507 residues: NAD(P)H-quinone oxidoreductase chain 4, chloroplastic (507 aa).

Transmembrane regions (helical) follow at residues 4 to 24, 34 to 54, 87 to 107, 111 to 131, 134 to 154, 167 to 187, 210 to 230, 241 to 261, 273 to 293, 312 to 332, 333 to 353, 383 to 403, 416 to 436, and 462 to 482; these read FPWITSIVMLPILAGLLIPFI, WYALGIGLLDFLLISYIFGYK, IPLILLTGFITTLAMLGAWPI, AKLFYFLMLAMYSGQLGVFAS, LLLFFLMWELELIPIYILLII, FILYTALGSIFILIAAFGMAF, ILFYICFLIAYAVKLPAFPVH, HYSTCMLLAGILLKMGGYALI, IYFAPYLAIIGVINIIYAALT, MGFVLIGISSFTDIGLSGAML, QMVSHGLIGASLFFLAGTTYD, ASLALPGMSGFVAELMVFLGF, IITFLEAIGIIVTPIYLLSML, and IFIISCLLVPVIGIGIYPRIL.

The protein belongs to the complex I subunit 4 family.

The protein localises to the plastid. The protein resides in the chloroplast thylakoid membrane. It carries out the reaction a plastoquinone + NADH + (n+1) H(+)(in) = a plastoquinol + NAD(+) + n H(+)(out). The catalysed reaction is a plastoquinone + NADPH + (n+1) H(+)(in) = a plastoquinol + NADP(+) + n H(+)(out). This is NAD(P)H-quinone oxidoreductase chain 4, chloroplastic (ndhD) from Mesostigma viride (Green alga).